A 190-amino-acid chain; its full sequence is Acyl-acyl carrier protein thioesterase ATL3, chloroplastic (190 aa).

The N-terminal 49 residues, 1 to 49 (MFLQVTGTATPAMPAVVFLNSWRRPLSIPLRSVKTFKPLAFFDLKGGKG), are a transit peptide targeting the chloroplast. D66 is an active-site residue.

Belongs to the 4-hydroxybenzoyl-CoA thioesterase family. Highly expressed in stems and flowers and at lower levels in rosette leaves, cauline leaves and siliques.

Its subcellular location is the plastid. The protein localises to the chloroplast. In terms of biological role, acyl-ACP thioesterase involved in the production of fatty acids and beta-keto fatty acids. Can produce fatty acids of long chain (14:1 and 16:1) and beta-keto fatty acids of medium to long chain (8:0, 10:0, 12:0, 12:1, 14:0 and 16:0) when expressed in a heterologous organism (E.coli). Possesses thioesterase activity for lauroyl-ACP (12:0-ACP) in vitro. May play a role in the generation of long fatty acids in the chloroplast. The chain is Acyl-acyl carrier protein thioesterase ATL3, chloroplastic from Arabidopsis thaliana (Mouse-ear cress).